Reading from the N-terminus, the 1925-residue chain is Methylcytosine dioxygenase tet3-A (1925 aa).

A CXXC-type zinc finger spans residues 62 to 103 (SNKKRKRCGVCVPCLRKEPCGACYNCVNRSTSHQICKMRKCE). Zn(2+) contacts are provided by cysteine 69, cysteine 72, cysteine 75, cysteine 81, cysteine 84, cysteine 87, cysteine 97, and cysteine 102. 4 disordered regions span residues 457–476 (KNAL…QNKK), 630–685 (KSQK…NAVF), 774–812 (GAKD…QNDL), and 833–892 (DFSL…PISH). The span at 465-476 (SPRQTSWEQNKK) shows a compositional bias: polar residues. Residues 665-677 (KPPRKQVQIKKPR) show a composition bias toward basic residues. Positions 777-797 (DSCPTPSTDDASSSSGQGDSA) are enriched in low complexity. 2 stretches are compositionally biased toward polar residues: residues 841–856 (APSQ…QISG) and 883–892 (PALSNNPISH). Residues cysteine 982, cysteine 984, cysteine 1042, histidine 1068, and cysteine 1070 each contribute to the Zn(2+) site. A 2-oxoglutarate-binding site is contributed by arginine 1110. Zn(2+) is bound by residues cysteine 1120, cysteine 1122, cysteine 1138, cysteine 1147, and cysteine 1207. Residue cysteine 1223 participates in 2-oxoglutarate binding. Histidine 1229 is a Zn(2+) binding site. Residues histidine 1231 and aspartate 1233 each contribute to the Fe cation site. Residue histidine 1265 participates in 2-oxoglutarate binding. Disordered regions lie at residues 1307-1364 (SEPA…QTKP), 1474-1513 (LADG…KSFN), 1556-1600 (SVHS…LPND), and 1722-1769 (NWAS…EEEI). Over residues 1316–1347 (RQLDAKKAAAEKKKLQKEKLVSPDKTKQEPAD) the composition is skewed to basic and acidic residues. Residues 1350–1363 (MCQQNPGVPQQQTK) are compositionally biased toward polar residues. The segment covering 1490 to 1499 (SYRRSSEVPH) has biased composition (basic and acidic residues). 3 stretches are compositionally biased toward polar residues: residues 1502–1513 (SLQNPNSQKSFN), 1556–1572 (SVHS…QTSD), and 1730–1742 (VGNS…SQNH). Histidine 1804 provides a ligand contact to Fe cation. 1819-1821 (RIS) is a 2-oxoglutarate binding site. Positions 1837–1870 (LALWEAKMKLLAERARVKEEEAARLGIKQEVKSL) form a coiled coil.

Belongs to the TET family. The cofactor is Fe(2+). It depends on Zn(2+) as a cofactor. In terms of tissue distribution, detected in embryo (at protein level). Detected in embryonic head, in developing brain, neural tube and eye.

It is found in the nucleus. The protein localises to the chromosome. It catalyses the reaction a 5-methyl-2'-deoxycytidine in DNA + 2-oxoglutarate + O2 = a 5-hydroxymethyl-2'-deoxycytidine in DNA + succinate + CO2. The catalysed reaction is a 5-hydroxymethyl-2'-deoxycytidine in DNA + 2-oxoglutarate + O2 = a 5-formyl-2'-deoxycytidine in DNA + succinate + CO2 + H2O. It carries out the reaction a 5-formyl-2'-deoxycytidine in DNA + 2-oxoglutarate + O2 = a 5-carboxyl-2'-deoxycytidine in DNA + succinate + CO2 + H(+). Functionally, dioxygenase that catalyzes the conversion of the modified genomic base 5-methylcytosine (5mC) into 5-hydroxymethylcytosine (5hmC) and plays a key role in epigenetic chromatin reprogramming during embryonic development. Conversion of 5mC into 5hmC probably constitutes the first step in cytosine demethylation. Selectively binds to the promoter region of target genes and contributes to regulate the expression of numerous developmental genes, including pax6, rax, sox9 and six3. May also contribute to the regulation of target genes in ways that do not require its enzyme activity. The protein is Methylcytosine dioxygenase tet3-A of Xenopus laevis (African clawed frog).